The chain runs to 201 residues: HTH-type transcriptional regulator Hpr (201 aa).

The HTH marR-type domain occupies 13-157; it reads AMLFSQRIAQ…MMCIIRNIYG (145 aa). The H-T-H motif DNA-binding region spans 63-86; sequence ISEIAKFGVMHVSTAFNFSKKLEE.

As to quaternary structure, homodimer.

Negative regulator of protease production and sporulation. The chain is HTH-type transcriptional regulator Hpr from Geobacillus sp. (strain WCH70).